A 320-amino-acid polypeptide reads, in one-letter code: SUMO-activating enzyme subunit 1B-1 (320 aa).

Met-1 carries the N-acetylmethionine modification.

The protein belongs to the ubiquitin-activating E1 family. In terms of assembly, heterodimer of SAE1A or SAE1B and SAE2. The complex binds SUMO proteins via SAE2.

Its subcellular location is the nucleus. It functions in the pathway protein modification; protein sumoylation. In terms of biological role, the dimeric enzyme acts as an E1 ligase for SUMO1 and SUMO2. It mediates ATP-dependent activation of SUMO proteins and formation of a thioester with a conserved cysteine residue on SAE2. Functionally redundant with its paralog SAE1A. The protein is SUMO-activating enzyme subunit 1B-1 (SAE1B-1) of Arabidopsis thaliana (Mouse-ear cress).